The chain runs to 887 residues: Bifunctional uridylyltransferase/uridylyl-removing enzyme (887 aa).

The interval 1–337 (MINTSPLLNY…RLPNYERKIE (337 aa)) is uridylyltransferase. Residues 339–699 (VNDHFKIVDN…AHRKAAQDAV (361 aa)) are uridylyl-removing. Positions 457 to 579 (VDAHTLLLLR…LGDMEHLDYL (123 aa)) constitute an HD domain. ACT domains are found at residues 700-782 (QIFI…LMQR) and 809-887 (MVEI…ICQH).

It belongs to the GlnD family. It depends on Mg(2+) as a cofactor.

The catalysed reaction is [protein-PII]-L-tyrosine + UTP = [protein-PII]-uridylyl-L-tyrosine + diphosphate. It carries out the reaction [protein-PII]-uridylyl-L-tyrosine + H2O = [protein-PII]-L-tyrosine + UMP + H(+). With respect to regulation, uridylyltransferase (UTase) activity is inhibited by glutamine, while glutamine activates uridylyl-removing (UR) activity. Its function is as follows. Modifies, by uridylylation and deuridylylation, the PII regulatory proteins (GlnB and homologs), in response to the nitrogen status of the cell that GlnD senses through the glutamine level. Under low glutamine levels, catalyzes the conversion of the PII proteins and UTP to PII-UMP and PPi, while under higher glutamine levels, GlnD hydrolyzes PII-UMP to PII and UMP (deuridylylation). Thus, controls uridylylation state and activity of the PII proteins, and plays an important role in the regulation of nitrogen assimilation and metabolism. The chain is Bifunctional uridylyltransferase/uridylyl-removing enzyme from Acinetobacter baumannii (strain AB307-0294).